The chain runs to 80 residues: Cell division protein ZapB (80 aa).

The stretch at 3 to 80 forms a coiled coil; it reads FEVLEKLEAK…ALLGKMEDVE (78 aa).

This sequence belongs to the ZapB family. Homodimer. The ends of the coiled-coil dimer bind to each other, forming polymers. Interacts with FtsZ.

Its subcellular location is the cytoplasm. In terms of biological role, non-essential, abundant cell division factor that is required for proper Z-ring formation. It is recruited early to the divisome by direct interaction with FtsZ, stimulating Z-ring assembly and thereby promoting cell division earlier in the cell cycle. Its recruitment to the Z-ring requires functional FtsA or ZipA. This Vibrio vulnificus (strain CMCP6) protein is Cell division protein ZapB.